The primary structure comprises 776 residues: Lon protease (776 aa).

The region spanning 12 to 209 (LPIIALRGLW…LVYKFVIKEI (198 aa)) is the Lon N-terminal domain. 360–367 (GPPGVGKT) is an ATP binding site. The Lon proteolytic domain maps to 596–776 (EDTVGVVNGL…VKEILDEVLI (181 aa)). Residues Ser-683 and Lys-726 contribute to the active site.

It belongs to the peptidase S16 family. Homohexamer. Organized in a ring with a central cavity.

The protein localises to the cytoplasm. It catalyses the reaction Hydrolysis of proteins in presence of ATP.. In terms of biological role, ATP-dependent serine protease that mediates the selective degradation of mutant and abnormal proteins as well as certain short-lived regulatory proteins. Required for cellular homeostasis and for survival from DNA damage and developmental changes induced by stress. Degrades polypeptides processively to yield small peptide fragments that are 5 to 10 amino acids long. Binds to DNA in a double-stranded, site-specific manner. In Finegoldia magna (strain ATCC 29328 / DSM 20472 / WAL 2508) (Peptostreptococcus magnus), this protein is Lon protease.